Reading from the N-terminus, the 71-residue chain is MPSVKVRENEPFEFALRRFKRTCEKAGVLAETRKREFYEKPTQERKRKAAAAVKRQLRRSSRDVTKRQRLY.

Residues 39-71 (EKPTQERKRKAAAAVKRQLRRSSRDVTKRQRLY) form a disordered region. The segment covering 45 to 59 (RKRKAAAAVKRQLRR) has biased composition (basic residues). Positions 60–71 (SSRDVTKRQRLY) are enriched in basic and acidic residues.

Belongs to the bacterial ribosomal protein bS21 family.

The polypeptide is Small ribosomal subunit protein bS21 (Stenotrophomonas maltophilia (strain K279a)).